Consider the following 101-residue polypeptide: ATP synthase subunit f, mitochondrial (101 aa).

The transit peptide at 1-6 directs the protein to the mitochondrion; sequence MIFKRA.

It belongs to the ATPase F chain family. F-type ATPases have 2 components, CF(1) - the catalytic core - and CF(0) - the membrane proton channel. In yeast, the dimeric form of ATP synthase consists of 17 polypeptides: alpha, beta, gamma, delta, epsilon, 4 (B), 5 (OSCP), 6 (A), 8, 9 (C), d, E (Tim11), f, g, h, i/j and k.

It localises to the mitochondrion. The protein localises to the mitochondrion inner membrane. Its function is as follows. Mitochondrial membrane ATP synthase (F(1)F(0) ATP synthase or Complex V) produces ATP from ADP in the presence of a proton gradient across the membrane which is generated by electron transport complexes of the respiratory chain. F-type ATPases consist of two structural domains, F(1) - containing the extramembraneous catalytic core and F(0) - containing the membrane proton channel, linked together by a central stalk and a peripheral stalk. During catalysis, ATP synthesis in the catalytic domain of F(1) is coupled via a rotary mechanism of the central stalk subunits to proton translocation. Part of the complex F(0) domain. Minor subunit located with subunit a in the membrane. The chain is ATP synthase subunit f, mitochondrial (ATP17) from Saccharomyces cerevisiae (strain ATCC 204508 / S288c) (Baker's yeast).